Here is a 597-residue protein sequence, read N- to C-terminus: Siderophore iron transporter 2 (597 aa).

Residue Ser-46 is modified to Phosphoserine. Transmembrane regions (helical) follow at residues 65–85, 97–117, 131–151, 159–179, 190–210, 225–245, 281–301, 312–332, 357–377, 390–410, 419–439, 448–468, 485–505, and 558–578; these read IIVA…EQQT, FSAH…LAVV, SESL…LAFS, VAYI…QLII, ILSA…PVLA, YGIW…SLFL, LDGL…LPFS, TILT…LCFY, VLIF…TSFL, LTLN…GFLM, LLMI…LFGI, LVLV…SAQI, LYLT…GGVW, and KDLF…LVII.

Belongs to the major facilitator superfamily.

It is found in the membrane. In terms of biological role, involved in the transport of siderophore iron and so has a role in iron homeostasis. The protein is Siderophore iron transporter 2 (str2) of Schizosaccharomyces pombe (strain 972 / ATCC 24843) (Fission yeast).